Consider the following 404-residue polypeptide: Major outer membrane porin (404 aa).

The N-terminal stretch at 1–22 (MKKLLKSVLAFAVLGSASSLHA) is a signal peptide. The disordered stretch occupies residues 85–110 (GPVPTTTDTDAAADITTSTPRENPAY). Over residues 89–103 (TTTDTDAAADITTST) the composition is skewed to low complexity.

The protein belongs to the chlamydial porin (CP) (TC 1.B.2) family. As to quaternary structure, part of a disulfide cross-linked outer membrane complex (COMC) composed of the major outer membrane porin (MOMP), the small cysteine-rich protein (OmcA) and the large cysteine-rich periplasmic protein (OmcB).

It is found in the cell outer membrane. Its function is as follows. In elementary bodies (EBs, the infectious stage, which is able to survive outside the host cell) provides the structural integrity of the outer envelope through disulfide cross-links with the small cysteine-rich protein and the large cysteine-rich periplasmic protein. It has been described in publications as the Sarkosyl-insoluble COMC (Chlamydia outer membrane complex), and serves as the functional equivalent of peptidoglycan. In terms of biological role, permits diffusion of specific solutes through the outer membrane. The sequence is that of Major outer membrane porin (ompA) from Chlamydia muridarum.